The sequence spans 301 residues: Sulfate adenylyltransferase subunit 2 1 (301 aa).

This sequence belongs to the PAPS reductase family. CysD subfamily. In terms of assembly, heterodimer composed of CysD, the smaller subunit, and CysN.

It catalyses the reaction sulfate + ATP + H(+) = adenosine 5'-phosphosulfate + diphosphate. It participates in sulfur metabolism; hydrogen sulfide biosynthesis; sulfite from sulfate: step 1/3. With CysN forms the ATP sulfurylase (ATPS) that catalyzes the adenylation of sulfate producing adenosine 5'-phosphosulfate (APS) and diphosphate, the first enzymatic step in sulfur assimilation pathway. APS synthesis involves the formation of a high-energy phosphoric-sulfuric acid anhydride bond driven by GTP hydrolysis by CysN coupled to ATP hydrolysis by CysD. The protein is Sulfate adenylyltransferase subunit 2 1 of Shewanella sediminis (strain HAW-EB3).